The chain runs to 433 residues: Probable M18 family aminopeptidase 2 (433 aa).

3 residues coordinate Zn(2+): H84, H161, and H409.

This sequence belongs to the peptidase M18 family. It depends on Zn(2+) as a cofactor.

This Clostridium acetobutylicum (strain ATCC 824 / DSM 792 / JCM 1419 / IAM 19013 / LMG 5710 / NBRC 13948 / NRRL B-527 / VKM B-1787 / 2291 / W) protein is Probable M18 family aminopeptidase 2 (apeB).